The chain runs to 366 residues: Histidinol-phosphate aminotransferase (366 aa).

N6-(pyridoxal phosphate)lysine is present on Lys-228.

Belongs to the class-II pyridoxal-phosphate-dependent aminotransferase family. Histidinol-phosphate aminotransferase subfamily. As to quaternary structure, homodimer. Pyridoxal 5'-phosphate serves as cofactor.

It catalyses the reaction L-histidinol phosphate + 2-oxoglutarate = 3-(imidazol-4-yl)-2-oxopropyl phosphate + L-glutamate. Its pathway is amino-acid biosynthesis; L-histidine biosynthesis; L-histidine from 5-phospho-alpha-D-ribose 1-diphosphate: step 7/9. The sequence is that of Histidinol-phosphate aminotransferase from Corynebacterium glutamicum (strain R).